The sequence spans 262 residues: Small ribosomal subunit protein eS4C (262 aa).

The 64-residue stretch at 42–105 folds into the S4 RNA-binding domain; the sequence is LPLIVFLRNR…GEHFRLVYDI (64 aa). At threonine 194 the chain carries Phosphothreonine.

It belongs to the eukaryotic ribosomal protein eS4 family. As to quaternary structure, component of the small ribosomal subunit (SSU). Mature yeast ribosomes consist of a small (40S) and a large (60S) subunit. The 40S small subunit contains 1 molecule of ribosomal RNA (18S rRNA) and at least 33 different proteins. The large 60S subunit contains 3 rRNA molecules (25S, 5.8S and 5S rRNA) and at least 46 different proteins.

It localises to the cytoplasm. Component of the ribosome, a large ribonucleoprotein complex responsible for the synthesis of proteins in the cell. The small ribosomal subunit (SSU) binds messenger RNAs (mRNAs) and translates the encoded message by selecting cognate aminoacyl-transfer RNA (tRNA) molecules. The large subunit (LSU) contains the ribosomal catalytic site termed the peptidyl transferase center (PTC), which catalyzes the formation of peptide bonds, thereby polymerizing the amino acids delivered by tRNAs into a polypeptide chain. The nascent polypeptides leave the ribosome through a tunnel in the LSU and interact with protein factors that function in enzymatic processing, targeting, and the membrane insertion of nascent chains at the exit of the ribosomal tunnel. This Schizosaccharomyces pombe (strain 972 / ATCC 24843) (Fission yeast) protein is Small ribosomal subunit protein eS4C (rps403).